We begin with the raw amino-acid sequence, 198 residues long: ATP-dependent Clp protease proteolytic subunit (198 aa).

The active-site Nucleophile is the S103. H128 is a catalytic residue.

The protein belongs to the peptidase S14 family. As to quaternary structure, fourteen ClpP subunits assemble into 2 heptameric rings which stack back to back to give a disk-like structure with a central cavity, resembling the structure of eukaryotic proteasomes.

It is found in the cytoplasm. It catalyses the reaction Hydrolysis of proteins to small peptides in the presence of ATP and magnesium. alpha-casein is the usual test substrate. In the absence of ATP, only oligopeptides shorter than five residues are hydrolyzed (such as succinyl-Leu-Tyr-|-NHMec, and Leu-Tyr-Leu-|-Tyr-Trp, in which cleavage of the -Tyr-|-Leu- and -Tyr-|-Trp bonds also occurs).. In terms of biological role, cleaves peptides in various proteins in a process that requires ATP hydrolysis. Has a chymotrypsin-like activity. Plays a major role in the degradation of misfolded proteins. This is ATP-dependent Clp protease proteolytic subunit from Ruthia magnifica subsp. Calyptogena magnifica.